The sequence spans 105 residues: Met repressor (105 aa).

Belongs to the MetJ family. Homodimer.

Its subcellular location is the cytoplasm. Its function is as follows. This regulatory protein, when combined with SAM (S-adenosylmethionine) represses the expression of the methionine regulon and of enzymes involved in SAM synthesis. This is Met repressor from Klebsiella pneumoniae subsp. pneumoniae (strain ATCC 700721 / MGH 78578).